A 367-amino-acid polypeptide reads, in one-letter code: tRNA(Ile)-lysidine synthase, chloroplastic (367 aa).

64–69 (SGGQDS) is a binding site for ATP.

It belongs to the tRNA(Ile)-lysidine synthase family.

The protein resides in the plastid. It localises to the chloroplast. It carries out the reaction cytidine(34) in tRNA(Ile2) + L-lysine + ATP = lysidine(34) in tRNA(Ile2) + AMP + diphosphate + H(+). Functionally, ligates lysine onto the cytidine present at position 34 of the AUA codon-specific tRNA(Ile) that contains the anticodon CAU, in an ATP-dependent manner. Cytidine is converted to lysidine, thus changing the amino acid specificity of the tRNA from methionine to isoleucine. In Nephroselmis olivacea (Green alga), this protein is tRNA(Ile)-lysidine synthase, chloroplastic.